The chain runs to 96 residues: Co-chaperonin GroES (96 aa).

The protein belongs to the GroES chaperonin family. Heptamer of 7 subunits arranged in a ring. Interacts with the chaperonin GroEL.

Its subcellular location is the cytoplasm. Its function is as follows. Together with the chaperonin GroEL, plays an essential role in assisting protein folding. The GroEL-GroES system forms a nano-cage that allows encapsulation of the non-native substrate proteins and provides a physical environment optimized to promote and accelerate protein folding. GroES binds to the apical surface of the GroEL ring, thereby capping the opening of the GroEL channel. In Chromohalobacter salexigens (strain ATCC BAA-138 / DSM 3043 / CIP 106854 / NCIMB 13768 / 1H11), this protein is Co-chaperonin GroES.